The primary structure comprises 466 residues: Soluble pyridine nucleotide transhydrogenase (466 aa).

Position 36-45 (36-45 (ERYQNVGGGC)) interacts with FAD.

The protein belongs to the class-I pyridine nucleotide-disulfide oxidoreductase family. Homooligomer; probable homooctamer. The cofactor is FAD.

The protein localises to the cytoplasm. It carries out the reaction NAD(+) + NADPH = NADH + NADP(+). Its function is as follows. Conversion of NADPH, generated by peripheral catabolic pathways, to NADH, which can enter the respiratory chain for energy generation. In Shigella flexneri, this protein is Soluble pyridine nucleotide transhydrogenase.